The following is a 167-amino-acid chain: RNA pyrophosphohydrolase (167 aa).

The Nudix hydrolase domain occupies 8 to 158; sequence PYRTCVGMML…KRPVYERVVK (151 aa). The Nudix box motif lies at 47–68; it reads GGVDPGEDTWEAAKRELYEETN.

The protein belongs to the Nudix hydrolase family. RppH subfamily. A divalent metal cation is required as a cofactor.

In terms of biological role, accelerates the degradation of transcripts by removing pyrophosphate from the 5'-end of triphosphorylated RNA, leading to a more labile monophosphorylated state that can stimulate subsequent ribonuclease cleavage. This chain is RNA pyrophosphohydrolase, found in Rhodopseudomonas palustris (strain HaA2).